The primary structure comprises 114 residues: UPF0342 protein NWMN_1737 (114 aa).

It belongs to the UPF0342 family.

The polypeptide is UPF0342 protein NWMN_1737 (Staphylococcus aureus (strain Newman)).